Consider the following 617-residue polypeptide: Na(+)/H(+) antiporter NhaA 1 (617 aa).

Positions 1-26 are disordered; it reads MTVTEPATQRGFPLLPSRLSRGSKAT. Residues 1 to 433 form a na(+)/H(+) antiporter NhaA region; it reads MTVTEPATQR…GWAIFRITDW (433 aa). A run of 11 helical transmembrane segments spans residues 33-53, 75-95, 113-133, 141-161, 171-191, 198-218, 234-254, 304-324, 341-361, 378-398, and 411-431; these read AAAL…SPWA, MTVK…IVGL, AVPV…FLAF, HAWG…LAII, LFLL…IAVL, VAPL…RYLP, IALY…ALLI, VSPV…AGVL, GIVA…TWLI, IAGG…IVDI, and IGVL…FRIT. A Thioredoxin domain is found at 434–617; the sequence is LSPPEPVGLK…LIRALEAGRG (184 aa).

This sequence in the N-terminal section; belongs to the NhaA Na(+)/H(+) (TC 2.A.33) antiporter family.

The protein localises to the cell membrane. It carries out the reaction Na(+)(in) + 2 H(+)(out) = Na(+)(out) + 2 H(+)(in). Its function is as follows. Na(+)/H(+) antiporter that extrudes sodium in exchange for external protons. This is Na(+)/H(+) antiporter NhaA 1 from Mycolicibacterium gilvum (strain PYR-GCK) (Mycobacterium gilvum (strain PYR-GCK)).